The chain runs to 132 residues: Small ribosomal subunit protein uS8 (132 aa).

Belongs to the universal ribosomal protein uS8 family. As to quaternary structure, part of the 30S ribosomal subunit. Contacts proteins S5 and S12.

One of the primary rRNA binding proteins, it binds directly to 16S rRNA central domain where it helps coordinate assembly of the platform of the 30S subunit. The chain is Small ribosomal subunit protein uS8 from Corynebacterium kroppenstedtii (strain DSM 44385 / JCM 11950 / CIP 105744 / CCUG 35717).